The chain runs to 419 residues: tRNA modification GTPase MnmE (419 aa).

Residues Arg-20, Glu-76, and Arg-115 each coordinate (6S)-5-formyl-5,6,7,8-tetrahydrofolate. The 138-residue stretch at Gly-211–Arg-348 folds into the TrmE-type G domain. Asn-221 lines the K(+) pocket. GTP-binding positions include Asn-221–Thr-226, Ser-240–Thr-246, and Asp-265–Gly-268. Mg(2+) is bound at residue Ser-225. The K(+) site is built by Ser-240, Ile-242, and Thr-245. Thr-246 lines the Mg(2+) pocket. Lys-419 contacts (6S)-5-formyl-5,6,7,8-tetrahydrofolate.

This sequence belongs to the TRAFAC class TrmE-Era-EngA-EngB-Septin-like GTPase superfamily. TrmE GTPase family. As to quaternary structure, homodimer. Heterotetramer of two MnmE and two MnmG subunits. The cofactor is K(+).

The protein localises to the cytoplasm. Its function is as follows. Exhibits a very high intrinsic GTPase hydrolysis rate. Involved in the addition of a carboxymethylaminomethyl (cmnm) group at the wobble position (U34) of certain tRNAs, forming tRNA-cmnm(5)s(2)U34. The chain is tRNA modification GTPase MnmE from Paracoccus denitrificans (strain Pd 1222).